We begin with the raw amino-acid sequence, 137 residues long: Large ribosomal subunit protein uL16 (137 aa).

The protein belongs to the universal ribosomal protein uL16 family. In terms of assembly, part of the 50S ribosomal subunit.

Its function is as follows. Binds 23S rRNA and is also seen to make contacts with the A and possibly P site tRNAs. The protein is Large ribosomal subunit protein uL16 of Spiroplasma kunkelii.